Consider the following 304-residue polypeptide: ATP phosphoribosyltransferase (304 aa).

The protein belongs to the ATP phosphoribosyltransferase family. Long subfamily. The cofactor is Mg(2+).

The protein resides in the cytoplasm. It catalyses the reaction 1-(5-phospho-beta-D-ribosyl)-ATP + diphosphate = 5-phospho-alpha-D-ribose 1-diphosphate + ATP. It participates in amino-acid biosynthesis; L-histidine biosynthesis; L-histidine from 5-phospho-alpha-D-ribose 1-diphosphate: step 1/9. Its activity is regulated as follows. Feedback inhibited by histidine. In terms of biological role, catalyzes the condensation of ATP and 5-phosphoribose 1-diphosphate to form N'-(5'-phosphoribosyl)-ATP (PR-ATP). Has a crucial role in the pathway because the rate of histidine biosynthesis seems to be controlled primarily by regulation of HisG enzymatic activity. This chain is ATP phosphoribosyltransferase, found in Xanthomonas campestris pv. campestris (strain 8004).